Consider the following 419-residue polypeptide: MDKFRVQGPTRLQGEVTISGAKNAALPILFSALLAEEPVEIQNVPKLKDIDTTMKLLSQLGAKVERNGSVWIDAGPVDVFCAPYDLVKTMRASIWALGPLVARFGQGQVSLPGGCAIGARPVDLHISGLEQLGAEIKLEEGYVKASVSGRLKGAHIVMDKVSVGATVTIMSAATLAEGTTIIENAAREPEIVDTANFLNALGAKITGQGSDRITIEGVQRLGGGVYRVLPDRIETGTFLVAAAISGGKILCRNAQPDTLDAVLAKLRDAGADIETGEDWISLDMHGNRPKAVNVRTAPHPGFPTDMQAQFTLLNLVAEGTGVITETIFENRFMHIPELIRMGAHAEIESNTAICHGVKQLSGAQVMATDLRASASLVLAGCIAEGTTIVDRIYHIDRGYERIEDKLQALGANIQRVKGE.

A phosphoenolpyruvate-binding site is contributed by 22–23; sequence KN. Arg-91 contacts UDP-N-acetyl-alpha-D-glucosamine. Cys-115 serves as the catalytic Proton donor. 2-(S-cysteinyl)pyruvic acid O-phosphothioketal is present on Cys-115. UDP-N-acetyl-alpha-D-glucosamine is bound by residues 120–124, 160–163, Asp-305, and Ile-327; these read RPVDL and KVSV.

The protein belongs to the EPSP synthase family. MurA subfamily.

The protein resides in the cytoplasm. The enzyme catalyses phosphoenolpyruvate + UDP-N-acetyl-alpha-D-glucosamine = UDP-N-acetyl-3-O-(1-carboxyvinyl)-alpha-D-glucosamine + phosphate. The protein operates within cell wall biogenesis; peptidoglycan biosynthesis. Its function is as follows. Cell wall formation. Adds enolpyruvyl to UDP-N-acetylglucosamine. The sequence is that of UDP-N-acetylglucosamine 1-carboxyvinyltransferase from Klebsiella pneumoniae subsp. pneumoniae (strain ATCC 700721 / MGH 78578).